An 87-amino-acid chain; its full sequence is MNKMQGKKKKKEEEEEEERIIPPELWKLIIEQYKRQLAKTDVMKVSETVKLHEEKIKEKVPTDHIIHAQKPNAWVEETKKSGGCLLV.

Cys84 is modified (cysteine methyl ester). Residue Cys84 is the site of S-geranylgeranyl cysteine attachment. The propeptide at 85–87 (LLV) is removed in mature form.

It belongs to the G protein gamma family. G proteins are composed of 3 units, alpha, beta and gamma. The N-terminus is blocked.

It is found in the cell membrane. Guanine nucleotide-binding proteins (G proteins) are involved as a modulator or transducer in various transmembrane signaling systems. This major G-protein of the squid photoreceptor is involved in visual transduction. The beta and gamma chains are required for the GTPase activity, for replacement of GDP by GTP, and for G protein-effector interaction. The sequence is that of Guanine nucleotide-binding protein subunit gamma from Loligo forbesii (Veined squid).